Here is a 267-residue protein sequence, read N- to C-terminus: 3-methyl-2-oxobutanoate hydroxymethyltransferase (267 aa).

D46 and D85 together coordinate Mg(2+). 3-methyl-2-oxobutanoate-binding positions include 46 to 47 (DS), D85, and K115. Residue E117 coordinates Mg(2+). E184 acts as the Proton acceptor in catalysis.

It belongs to the PanB family. In terms of assembly, homodecamer; pentamer of dimers. It depends on Mg(2+) as a cofactor.

The protein resides in the cytoplasm. It carries out the reaction 3-methyl-2-oxobutanoate + (6R)-5,10-methylene-5,6,7,8-tetrahydrofolate + H2O = 2-dehydropantoate + (6S)-5,6,7,8-tetrahydrofolate. The protein operates within cofactor biosynthesis; (R)-pantothenate biosynthesis; (R)-pantoate from 3-methyl-2-oxobutanoate: step 1/2. Functionally, catalyzes the reversible reaction in which hydroxymethyl group from 5,10-methylenetetrahydrofolate is transferred onto alpha-ketoisovalerate to form ketopantoate. This chain is 3-methyl-2-oxobutanoate hydroxymethyltransferase, found in Syntrophotalea carbinolica (strain DSM 2380 / NBRC 103641 / GraBd1) (Pelobacter carbinolicus).